The following is a 326-amino-acid chain: tRNA-modifying protein YgfZ (326 aa).

Residues Trp-27 and Trp-189 each contribute to the folate site.

Belongs to the tRNA-modifying YgfZ family.

Its subcellular location is the cytoplasm. Functionally, folate-binding protein involved in regulating the level of ATP-DnaA and in the modification of some tRNAs. It is probably a key factor in regulatory networks that act via tRNA modification, such as initiation of chromosomal replication. The protein is tRNA-modifying protein YgfZ of Shigella sonnei (strain Ss046).